The primary structure comprises 322 residues: tRNA-dihydrouridine(16) synthase (322 aa).

FMN contacts are provided by residues 8–10 and Q69; that span reads PME. C99 serves as the catalytic Proton donor. FMN-binding positions include K140, 200 to 202, and 224 to 225; these read NGD and GR.

The protein belongs to the Dus family. DusC subfamily. The cofactor is FMN.

It catalyses the reaction 5,6-dihydrouridine(16) in tRNA + NADP(+) = uridine(16) in tRNA + NADPH + H(+). It carries out the reaction 5,6-dihydrouridine(16) in tRNA + NAD(+) = uridine(16) in tRNA + NADH + H(+). Functionally, catalyzes the synthesis of 5,6-dihydrouridine (D), a modified base found in the D-loop of most tRNAs, via the reduction of the C5-C6 double bond in target uridines. Specifically modifies U16 in tRNAs. The chain is tRNA-dihydrouridine(16) synthase from Cupriavidus necator (strain ATCC 17699 / DSM 428 / KCTC 22496 / NCIMB 10442 / H16 / Stanier 337) (Ralstonia eutropha).